The chain runs to 296 residues: Pantothenate synthetase (296 aa).

Met-37 to His-44 serves as a coordination point for ATP. The Proton donor role is filled by His-44. Gln-68 serves as a coordination point for (R)-pantoate. Gln-68 is a binding site for beta-alanine. ATP is bound at residue Gly-160–Asp-163. Position 166 (Gln-166) interacts with (R)-pantoate. Residues Val-189 and Thr-197–Arg-200 each bind ATP.

This sequence belongs to the pantothenate synthetase family. As to quaternary structure, homodimer.

The protein localises to the cytoplasm. The catalysed reaction is (R)-pantoate + beta-alanine + ATP = (R)-pantothenate + AMP + diphosphate + H(+). Its pathway is cofactor biosynthesis; (R)-pantothenate biosynthesis; (R)-pantothenate from (R)-pantoate and beta-alanine: step 1/1. In terms of biological role, catalyzes the condensation of pantoate with beta-alanine in an ATP-dependent reaction via a pantoyl-adenylate intermediate. The polypeptide is Pantothenate synthetase (Thermobifida fusca (strain YX)).